The sequence spans 101 residues: Small ribosomal subunit protein uS14 (101 aa).

This sequence belongs to the universal ribosomal protein uS14 family. In terms of assembly, part of the 30S ribosomal subunit. Contacts proteins S3 and S10.

Binds 16S rRNA, required for the assembly of 30S particles and may also be responsible for determining the conformation of the 16S rRNA at the A site. The chain is Small ribosomal subunit protein uS14 from Protochlamydia amoebophila (strain UWE25).